The sequence spans 524 residues: Alanine aminotransferase 2 (524 aa).

An N6-(pyridoxal phosphate)lysine modification is found at K342.

Belongs to the class-I pyridoxal-phosphate-dependent aminotransferase family. Alanine aminotransferase subfamily. Homodimer. Pyridoxal 5'-phosphate is required as a cofactor.

It catalyses the reaction L-alanine + 2-oxoglutarate = pyruvate + L-glutamate. The protein operates within amino-acid degradation; L-alanine degradation via transaminase pathway; pyruvate from L-alanine: step 1/1. Functionally, catalyzes the reversible transamination between alanine and 2-oxoglutarate to form pyruvate and glutamate. This chain is Alanine aminotransferase 2 (gpt2), found in Xenopus tropicalis (Western clawed frog).